A 346-amino-acid chain; its full sequence is Tryptophan--tRNA ligase (346 aa).

ATP-binding positions include 21–23 and 30–31; these read QPT and GN. The 'HIGH' region motif lies at 22–31; sequence PTADSYHLGN. Position 147 (Asp147) interacts with L-tryptophan. Residues 159 to 161, Ile198, and 207 to 211 each bind ATP; these read GED and KMSKS. The 'KMSKS' region signature appears at 207–211; that stretch reads KMSKS.

The protein belongs to the class-I aminoacyl-tRNA synthetase family. Homodimer.

It localises to the cytoplasm. The enzyme catalyses tRNA(Trp) + L-tryptophan + ATP = L-tryptophyl-tRNA(Trp) + AMP + diphosphate + H(+). Functionally, catalyzes the attachment of tryptophan to tRNA(Trp). In Corynebacterium efficiens (strain DSM 44549 / YS-314 / AJ 12310 / JCM 11189 / NBRC 100395), this protein is Tryptophan--tRNA ligase.